Here is a 525-residue protein sequence, read N- to C-terminus: GMP synthase [glutamine-hydrolyzing] (525 aa).

The region spanning 12–206 (RILIIDFGSQ…THGICGCGGD (195 aa)) is the Glutamine amidotransferase type-1 domain. The active-site Nucleophile is the cysteine 90. Active-site residues include histidine 180 and glutamate 182. A GMPS ATP-PPase domain is found at 207–399 (WTMAAFKDQA…LGLPDEMVGR (193 aa)). 234–240 (SGGVDSS) is a binding site for ATP.

Homodimer.

The catalysed reaction is XMP + L-glutamine + ATP + H2O = GMP + L-glutamate + AMP + diphosphate + 2 H(+). It functions in the pathway purine metabolism; GMP biosynthesis; GMP from XMP (L-Gln route): step 1/1. Functionally, catalyzes the synthesis of GMP from XMP. This Rhodospirillum rubrum (strain ATCC 11170 / ATH 1.1.1 / DSM 467 / LMG 4362 / NCIMB 8255 / S1) protein is GMP synthase [glutamine-hydrolyzing].